We begin with the raw amino-acid sequence, 645 residues long: Sodium/potassium/calcium exchanger 3 (645 aa).

Positions 1 to 43 (MPPPGDQDCARRRSRRRRRDLLLSQLCFLASVALLLWSLSSLR) are cleaved as a signal peptide. The Extracellular segment spans residues 44 to 106 (EQKELDLMDL…DIFSNEDRRQ (63 aa)). 2 N-linked (GlcNAc...) asparagine glycosylation sites follow: asparagine 70 and asparagine 85. The helical transmembrane segment at 107-127 (GAVVLHVLCAMYMFYALAIVC) threads the bilayer. Topologically, residues 128-151 (DDFFVPSLEKICERLHLSEDVAGA) are cytoplasmic. An Alpha-1 repeat occupies 148–188 (VAGATFMAAGSSAPELFTSVIGVFITKGDVGVGTIVGSAVF). Residues 152–172 (TFMAAGSSAPELFTSVIGVFI) form a helical membrane-spanning segment. Topologically, residues 173-181 (TKGDVGVGT) are extracellular. The chain crosses the membrane as a helical span at residues 182 to 202 (IVGSAVFNILCIIGVCGLFAG). The Cytoplasmic segment spans residues 203-209 (QVVALSS). The helical transmembrane segment at 210–230 (WCLLRDSIYYTLSVVALIVFI) threads the bilayer. Topologically, residues 231-234 (YDEK) are extracellular. A helical membrane pass occupies residues 235-255 (VSWWESLVLVLMYLIYIVIMK). Residues 256-486 (YNACIHQCFE…WFMVTFASST (231 aa)) are Cytoplasmic-facing. A Phosphoserine modification is found at serine 307. 2 disordered regions span residues 379 to 398 (TVENGTGPSSAPDRGVNGTR) and 404 to 442 (AETDNETENENEDNENNENDEEEEEDEDDDEGPYTPFDP). Acidic residues predominate over residues 404–435 (AETDNETENENEDNENNENDEEEEEDEDDDEG). A helical membrane pass occupies residues 487-507 (LWIAAFSYMMVWMVTIIGYTL). Residues 508–512 (GIPDV) lie on the Extracellular side of the membrane. The helical transmembrane segment at 513-533 (IMGITFLAAGTSVPDCMASLI) threads the bilayer. The Alpha-2 repeat unit spans residues 520–551 (AAGTSVPDCMASLIVARQGMGDMAVSNSIGSN). Residues 534–551 (VARQGMGDMAVSNSIGSN) lie on the Cytoplasmic side of the membrane. Residues 552-572 (VFDILIGLGLPWALQTLAVDY) traverse the membrane as a helical segment. The Extracellular portion of the chain corresponds to 573–582 (GSYIRLNSRG). A helical transmembrane segment spans residues 583–603 (LIYSVGLLLASVFVTVFGVHL). The Cytoplasmic segment spans residues 604-617 (NKWQLDKKLGCGCL). Residues 618-638 (FLYGVFLCFSIMTEFNVFTFV) traverse the membrane as a helical segment. Residues 639–645 (NLPMCGD) lie on the Extracellular side of the membrane.

It belongs to the Ca(2+):cation antiporter (CaCA) (TC 2.A.19) family. SLC24A subfamily. Abundant in the brain. Highest levels found in selected thalamic nuclei, hippocampal CA1 neurons and in layer IV of the cerebral cortex. Expressed in dental tissues.

It is found in the cell membrane. It catalyses the reaction Ca(2+)(out) + K(+)(out) + 4 Na(+)(in) = Ca(2+)(in) + K(+)(in) + 4 Na(+)(out). Calcium, potassium:sodium antiporter that transports 1 Ca(2+) and 1 K(+) in exchange for 4 Na(+). In Mus musculus (Mouse), this protein is Sodium/potassium/calcium exchanger 3 (Slc24a3).